The chain runs to 203 residues: Histidine biosynthesis bifunctional protein HisIE (203 aa).

Positions 1–114 are phosphoribosyl-AMP cyclohydrolase; it reads MLTEQQRREL…FGDTAHQWLF (114 aa). Positions 115–203 are phosphoribosyl-ATP pyrophosphohydrolase; sequence LYQLEQLLAE…VIENLRKRHQ (89 aa).

In the N-terminal section; belongs to the PRA-CH family. This sequence in the C-terminal section; belongs to the PRA-PH family.

It is found in the cytoplasm. The catalysed reaction is 1-(5-phospho-beta-D-ribosyl)-ATP + H2O = 1-(5-phospho-beta-D-ribosyl)-5'-AMP + diphosphate + H(+). The enzyme catalyses 1-(5-phospho-beta-D-ribosyl)-5'-AMP + H2O = 1-(5-phospho-beta-D-ribosyl)-5-[(5-phospho-beta-D-ribosylamino)methylideneamino]imidazole-4-carboxamide. It participates in amino-acid biosynthesis; L-histidine biosynthesis; L-histidine from 5-phospho-alpha-D-ribose 1-diphosphate: step 2/9. It functions in the pathway amino-acid biosynthesis; L-histidine biosynthesis; L-histidine from 5-phospho-alpha-D-ribose 1-diphosphate: step 3/9. This is Histidine biosynthesis bifunctional protein HisIE from Shigella sonnei (strain Ss046).